A 193-amino-acid polypeptide reads, in one-letter code: dTTP/UTP pyrophosphatase (193 aa).

The active-site Proton acceptor is Asp-77.

Belongs to the Maf family. YhdE subfamily. A divalent metal cation is required as a cofactor.

It is found in the cytoplasm. The enzyme catalyses dTTP + H2O = dTMP + diphosphate + H(+). It carries out the reaction UTP + H2O = UMP + diphosphate + H(+). Nucleoside triphosphate pyrophosphatase that hydrolyzes dTTP and UTP. May have a dual role in cell division arrest and in preventing the incorporation of modified nucleotides into cellular nucleic acids. The chain is dTTP/UTP pyrophosphatase from Bacteroides thetaiotaomicron (strain ATCC 29148 / DSM 2079 / JCM 5827 / CCUG 10774 / NCTC 10582 / VPI-5482 / E50).